The primary structure comprises 540 residues: UDP-N-acetylmuramyl-tripeptide synthetase (540 aa).

Ser33 is a binding site for UDP-N-acetyl-alpha-D-muramoyl-L-alanyl-D-glutamate. 114 to 120 contributes to the ATP binding site; the sequence is GTEGKSS. Residues 158–159, Ser185, and Arg195 contribute to the UDP-N-acetyl-alpha-D-muramoyl-L-alanyl-D-glutamate site; that span reads TT. An N6-carboxylysine modification is found at Lys227.

It belongs to the MurCDEF family. MurE subfamily. In terms of processing, carboxylation is probably crucial for Mg(2+) binding and, consequently, for the gamma-phosphate positioning of ATP.

The protein resides in the cytoplasm. The protein operates within cell wall biogenesis; peptidoglycan biosynthesis. Functionally, catalyzes the addition of an amino acid to the nucleotide precursor UDP-N-acetylmuramoyl-L-alanyl-D-glutamate (UMAG) in the biosynthesis of bacterial cell-wall peptidoglycan. This chain is UDP-N-acetylmuramyl-tripeptide synthetase, found in Treponema pallidum (strain Nichols).